The following is a 568-amino-acid chain: Protein NDNF (568 aa).

Residues 1–19 (MVLLHWCLLWLLFPLSSRT) form the signal peptide. 2 consecutive Fibronectin type-III domains span residues 261 to 331 (NSGK…VGTF) and 445 to 564 (PSLP…VVKT). N322 carries N-linked (GlcNAc...) asparagine glycosylation.

As to quaternary structure, binds heparin and chondroitin sulfate. Post-translationally, O-glycosylated; contains heparan sulfate and chondroitin sulfate. In terms of processing, N-glycosylated. In terms of tissue distribution, expressed in neurons along the gonadotropin-releasing hormone (GnRH) expressing neurons migratory route.

The protein resides in the secreted. Functionally, secretory protein that plays a role in various cellular processes. Acts as a chemorepellent acting on gonadotropin-releasing hormone (GnRH) expressing neurons regulating their migration to the hypothalamus. Also promotes neuron migration, growth and survival as well as neurite outgrowth and is involved in the development of the olfactory system. May also act through the regulation of growth factors activity and downstream signaling. Also regulates extracellular matrix assembly and cell adhesiveness. Promotes endothelial cell survival, vessel formation and plays an important role in the process of revascularization through NOS3-dependent mechanisms. This chain is Protein NDNF (NDNF), found in Homo sapiens (Human).